The following is a 138-amino-acid chain: Single-stranded DNA-binding protein 4 (138 aa).

The SSB domain maps to 1–104 (MINNVVLIGR…VVADSFQILE (104 aa)). Positions 107–138 (DNSTNQASMDDQLPPSFGNSQPMDISDDDLPF) are disordered. The short motif at 133–138 (DDDLPF) is the Important for interaction with partner proteins element.

In terms of assembly, homotetramer.

In terms of biological role, plays an important role in DNA replication, recombination and repair. Binds to ssDNA and to an array of partner proteins to recruit them to their sites of action during DNA metabolism. The sequence is that of Single-stranded DNA-binding protein 4 (ssb4) from Streptococcus agalactiae serotype V (strain ATCC BAA-611 / 2603 V/R).